A 193-amino-acid polypeptide reads, in one-letter code: MNPLQEVIFCRQFGNQHRVPKPYYRRKTYLCYQLKLPEGTLIHKDCLRNKKKRHAEMCFIDKIKALTRDTSQRFEIICYITWSPCPFCAEELVAFVKDNPHLSLRIFASRLYVHWRWKYQQGLRHLHASGIPVAVMSLPEFEDCWRNFVDHQDRSFQPWPNLDQYSKSIKRRLGKILTPLNDLRNDFRNLKLE.

Residues 24–126 (YRRKTYLCYQ…WKYQQGLRHL (103 aa)) form the CMP/dCMP-type deaminase domain. H54 provides a ligand contact to Zn(2+). Residue E56 is the Proton donor of the active site. Positions 85 and 88 each coordinate Zn(2+).

It belongs to the cytidine and deoxycytidylate deaminase family. Homodimer. The cofactor is Zn(2+). In terms of tissue distribution, expressed in peripheral blood mononuclear cells.

Its subcellular location is the cytoplasm. The enzyme catalyses a 2'-deoxycytidine in single-stranded DNA + H2O + H(+) = a 2'-deoxyuridine in single-stranded DNA + NH4(+). DNA deaminase (cytidine deaminase) which acts as an inhibitor of retrovirus replication and retrotransposon mobility via deaminase-dependent and -independent mechanisms. Selectively targets single-stranded DNA and does not deaminate double-stranded DNA or single- or double-stranded RNA. Exhibits single-stranded DNA deaminase activity (in vitro). Incorporates into the released virions of the virion infectivity factor (vif)-deficient feline immunodeficiency virus (FIV) and suppresses FIV infectivity, probably in a deaminase-dependent manner (in vitro). Induces G-to-A hypermutations in vif-deficient FIV (in vitro). The APOBEC3H/APOBEC3Z3 haplotype 5 exhibits antiviral activity against vif-proficient FIV, strains Petaluma, C36 and Shizuoka (in vitro). Does not exhibit inhibitory activity against feline leukemia virus (FeLV), feline endogenous retrovirus (RD-114 virus) or a long interspersed nuclear element-1 (LINE-1) retrotransposon (in vitro). The chain is DNA dC-&gt;dU-editing enzyme APOBEC-3H from Felis catus (Cat).